The primary structure comprises 201 residues: Probable GTP-binding protein EngB (201 aa).

The region spanning 23–196 is the EngB-type G domain; sequence TGPEIALAGR…HEAVEEILSM (174 aa). GTP is bound by residues 31–38, 58–62, 76–79, 143–146, and 175–177; these read GRSNVGKS, GKTQM, DLPG, TKAD, and YSA. Mg(2+) contacts are provided by Ser-38 and Thr-60.

The protein belongs to the TRAFAC class TrmE-Era-EngA-EngB-Septin-like GTPase superfamily. EngB GTPase family. Mg(2+) serves as cofactor.

In terms of biological role, necessary for normal cell division and for the maintenance of normal septation. This is Probable GTP-binding protein EngB from Desulfitobacterium hafniense (strain DSM 10664 / DCB-2).